Reading from the N-terminus, the 149-residue chain is Cytochrome c-555 (149 aa).

Positions 1 to 20 (MKRTMIVVTTLLLGAGAVMA) are cleaved as a signal peptide. The heme c site is built by Met32, Cys137, Cys140, and His141.

In terms of assembly, monomer. In terms of processing, binds 1 heme c group covalently per subunit.

Its subcellular location is the periplasm. In terms of biological role, low-spin monoheme cytochrome. The chain is Cytochrome c-555 (cycC) from Bradyrhizobium diazoefficiens (strain JCM 10833 / BCRC 13528 / IAM 13628 / NBRC 14792 / USDA 110).